Consider the following 98-residue polypeptide: MKIPILPIVALLSLLALHAAQGAALGTPMEDTTSSNYPSGTEGLSEFLNFNKLQSAFKSDDFLNWHVLTDMFKKALPFINWEFFPKVKGLRSAVPDSQ.

The signal sequence occupies residues 1 to 22; sequence MKIPILPIVALLSLLALHAAQG.

Ubiquitously expressed in stratified epithelium.

The protein localises to the secreted. Functionally, may act as a soluble regulator of keratinocyte differentiation. May play an important role in embryonic skin morphogenesis. This is Keratinocyte differentiation-associated protein from Rattus norvegicus (Rat).